A 1070-amino-acid polypeptide reads, in one-letter code: DNA-directed RNA polymerase subunit beta (1070 aa).

This sequence belongs to the RNA polymerase beta chain family. In plastids the minimal PEP RNA polymerase catalytic core is composed of four subunits: alpha, beta, beta', and beta''. When a (nuclear-encoded) sigma factor is associated with the core the holoenzyme is formed, which can initiate transcription.

Its subcellular location is the plastid. The protein resides in the chloroplast. It catalyses the reaction RNA(n) + a ribonucleoside 5'-triphosphate = RNA(n+1) + diphosphate. In terms of biological role, DNA-dependent RNA polymerase catalyzes the transcription of DNA into RNA using the four ribonucleoside triphosphates as substrates. The protein is DNA-directed RNA polymerase subunit beta of Platanus occidentalis (Sycamore).